Here is a 370-residue protein sequence, read N- to C-terminus: tRNA-specific 2-thiouridylase MnmA (370 aa).

ATP is bound by residues 8–15 and methionine 34; that span reads GMSGGVDS. An interaction with target base in tRNA region spans residues 104 to 106; the sequence is NPD. Cysteine 109 serves as the catalytic Nucleophile. A disulfide bond links cysteine 109 and cysteine 202. Residue glycine 134 coordinates ATP. The segment at 152-154 is interaction with tRNA; the sequence is KDQ. Residue cysteine 202 is the Cysteine persulfide intermediate of the active site. The interval 309-310 is interaction with tRNA; sequence RY.

The protein belongs to the MnmA/TRMU family.

It is found in the cytoplasm. The catalysed reaction is S-sulfanyl-L-cysteinyl-[protein] + uridine(34) in tRNA + AH2 + ATP = 2-thiouridine(34) in tRNA + L-cysteinyl-[protein] + A + AMP + diphosphate + H(+). Functionally, catalyzes the 2-thiolation of uridine at the wobble position (U34) of tRNA, leading to the formation of s(2)U34. In Metamycoplasma arthritidis (strain 158L3-1) (Mycoplasma arthritidis), this protein is tRNA-specific 2-thiouridylase MnmA.